A 392-amino-acid chain; its full sequence is S-adenosylmethionine synthase (392 aa).

Residue H15 participates in ATP binding. D17 contacts Mg(2+). K(+) is bound at residue E43. 2 residues coordinate L-methionine: E56 and Q99. Positions 99-109 are flexible loop; that stretch reads QSKDIAQGVDE. Residues 173–175, 239–240, D248, 254–255, A271, and K275 contribute to the ATP site; these read DGK, KF, and RK. D248 contacts L-methionine. K279 lines the L-methionine pocket.

It belongs to the AdoMet synthase family. As to quaternary structure, homotetramer; dimer of dimers. The cofactor is Mg(2+). Requires K(+) as cofactor.

Its subcellular location is the cytoplasm. It catalyses the reaction L-methionine + ATP + H2O = S-adenosyl-L-methionine + phosphate + diphosphate. The protein operates within amino-acid biosynthesis; S-adenosyl-L-methionine biosynthesis; S-adenosyl-L-methionine from L-methionine: step 1/1. Functionally, catalyzes the formation of S-adenosylmethionine (AdoMet) from methionine and ATP. The overall synthetic reaction is composed of two sequential steps, AdoMet formation and the subsequent tripolyphosphate hydrolysis which occurs prior to release of AdoMet from the enzyme. In Finegoldia magna (strain ATCC 29328 / DSM 20472 / WAL 2508) (Peptostreptococcus magnus), this protein is S-adenosylmethionine synthase.